The primary structure comprises 295 residues: Cyclic dipyrimidine nucleotide synthase CdnE (295 aa).

The interval 1–25 is disordered; the sequence is MSIDWEQTFRKWSKPSSETESTKAE. Positions 51, 53, and 59 each coordinate UTP. Mg(2+)-binding residues include Asp65 and Asp67. Asp67, Asp124, and Lys125 together coordinate UTP. Mg(2+)-binding residues include Asp128 and Asp139. UTP is bound by residues Asp139, Asn173, Lys201, and Ser220. The Pyrimidine specificity motif (R/Q)xW in donor pocket signature appears at 274 to 276; the sequence is QMW.

It belongs to the CD-NTase family. E02 subfamily. The cofactor is Mg(2+).

The enzyme catalyses 2 UTP = c-di-UMP + 2 diphosphate. It catalyses the reaction UTP + CTP = cyclic CMP-UMP + 2 diphosphate. In terms of biological role, cyclic nucleotide synthase (second messenger synthase) of a CBASS antivirus system. CBASS (cyclic oligonucleotide-based antiphage signaling system) provides immunity against bacteriophage. The CD-NTase protein synthesizes cyclic nucleotides in response to infection; these serve as specific second messenger signals. The signals activate a diverse range of effectors, leading to bacterial cell death and thus abortive phage infection. A type I-B(UU) CBASS system. Cyclic dinucleotide synthase that catalyzes the synthesis of 3',3'-cyclic UMP-UMP (c-di-UMP) as the major product, and of 3',3'-cyclic CMP-UMP as a minor product, which are second messengers for cell signal transduction. The protein is Cyclic dipyrimidine nucleotide synthase CdnE of Legionella pneumophila.